The sequence spans 151 residues: Ribosome maturation factor RimP (151 aa).

This sequence belongs to the RimP family.

The protein resides in the cytoplasm. Its function is as follows. Required for maturation of 30S ribosomal subunits. This Shewanella denitrificans (strain OS217 / ATCC BAA-1090 / DSM 15013) protein is Ribosome maturation factor RimP.